Consider the following 343-residue polypeptide: Ferrochelatase (343 aa).

Fe cation contacts are provided by H211 and E292.

It belongs to the ferrochelatase family.

The protein resides in the cytoplasm. The catalysed reaction is heme b + 2 H(+) = protoporphyrin IX + Fe(2+). The protein operates within porphyrin-containing compound metabolism; protoheme biosynthesis; protoheme from protoporphyrin-IX: step 1/1. Functionally, catalyzes the ferrous insertion into protoporphyrin IX. The protein is Ferrochelatase of Gluconobacter oxydans (strain 621H) (Gluconobacter suboxydans).